Consider the following 68-residue polypeptide: Large ribosomal subunit protein uL30 (68 aa).

Belongs to the universal ribosomal protein uL30 family. Part of the 50S ribosomal subunit.

The chain is Large ribosomal subunit protein uL30 from Kocuria rhizophila (strain ATCC 9341 / DSM 348 / NBRC 103217 / DC2201).